A 526-amino-acid chain; its full sequence is G-protein coupled receptor 161 (526 aa).

The Extracellular segment spans residues 1-27 (MNGSKNGTAVANSTNGLDDNGLMVLES). N-linked (GlcNAc...) asparagine glycans are attached at residues Asn2, Asn6, and Asn12. A helical membrane pass occupies residues 28 to 48 (VSIIIIAILACLGNLVIVVTL). At 49 to 60 (YKKPYLLTPSNK) the chain is on the cytoplasmic side. The chain crosses the membrane as a helical span at residues 61-81 (FVFSLTSSNLLLSVLMLPFVV). The Extracellular segment spans residues 82–98 (ASSVRRDWMFGVVWCNF). A disulfide bridge connects residues Cys96 and Cys174. Asn97 carries an N-linked (GlcNAc...) asparagine glycan. A helical membrane pass occupies residues 99 to 119 (TALLHLLVSSSSMLTLGAIAI). The Cytoplasmic segment spans residues 120–139 (DRYYAVLYPMIYPMKITGNR). The chain crosses the membrane as a helical span at residues 140–160 (AVLAIVYIWLHSLVGCLPPLF). Topologically, residues 161 to 186 (GWSSFEFDRFKWTCTVSWHKEISYTA) are extracellular. A helical membrane pass occupies residues 187–207 (FWVTWCCLLPLVAMLVCYGVI). The Cytoplasmic portion of the chain corresponds to 208–263 (FRVARIKARKVYCGSVVVSQEESSSQNNGRKNSNTSTSSSGSRKSLIYSGSQCKAF). The tract at residues 231–250 (SSQNNGRKNSNTSTSSSGSR) is disordered. The chain crosses the membrane as a helical span at residues 264–284 (ITILVVLGTFLTTWGPYVVVI). Residues 285-300 (STEALLGKNSVSPQVE) are Extracellular-facing. The chain crosses the membrane as a helical span at residues 301–321 (TLVSWLSFTSAVCHPLIYGLW). At 322–526 (NKTVRKELLG…EEEMEREEKM (205 aa)) the chain is on the cytoplasmic side. The segment at 505–526 (IDEGIVKDDDDDEEEMEREEKM) is disordered. Acidic residues predominate over residues 512–526 (DDDDDEEEMEREEKM).

This sequence belongs to the G-protein coupled receptor 1 family.

It is found in the cell projection. The protein localises to the cilium membrane. It localises to the cell membrane. In terms of biological role, key negative regulator of Shh signaling during neural tube development. Recruited to primary cilia and acts as a regulator of the PKA-dependent basal repression machinery in Shh signaling by increasing cAMP levels, leading to promote the PKA-dependent processing of gli3 into gli3r and repress the Shh signaling. In presence of shh, it is removed from primary cilia, preventing its activity and allowing activation of the Shh signaling. Required in left/right patterning by modulating Ca(2+) levels in the cells surrounding the Kupffer vesicle. In Danio rerio (Zebrafish), this protein is G-protein coupled receptor 161 (gpr161).